The chain runs to 341 residues: Phosphate acyltransferase (341 aa).

This sequence belongs to the PlsX family. Homodimer. Probably interacts with PlsY.

It localises to the cytoplasm. It catalyses the reaction a fatty acyl-[ACP] + phosphate = an acyl phosphate + holo-[ACP]. It functions in the pathway lipid metabolism; phospholipid metabolism. Catalyzes the reversible formation of acyl-phosphate (acyl-PO(4)) from acyl-[acyl-carrier-protein] (acyl-ACP). This enzyme utilizes acyl-ACP as fatty acyl donor, but not acyl-CoA. This Vibrio atlanticus (strain LGP32) (Vibrio splendidus (strain Mel32)) protein is Phosphate acyltransferase.